Consider the following 312-residue polypeptide: uncharacterized protein (312 aa).

The protein belongs to the asfivirus CP312R family.

Its subcellular location is the virion. This is an uncharacterized protein from African swine fever virus (strain Badajoz 1971 Vero-adapted) (Ba71V).